The sequence spans 444 residues: Sperm-associated antigen 4 protein (444 aa).

Residues 1–109 (MRRNPRPGSA…GGASEPSGSP (109 aa)) are disordered. A compositionally biased stretch (low complexity) spans 19–36 (NFYSENSNSSHSATSGDS). 2 consecutive transmembrane segments (helical) span residues 137-159 (FLSL…LVCV) and 166-188 (IRFL…WGLL). Positions 204–241 (LSQYHHRVHSQGQQLQQLQAELSKLHKEVTSVRAAHSE) form a coiled coil. An SUN domain is found at 267 to 428 (GASIDLEKTS…YRVRAHGVRI (162 aa)).

In terms of assembly, self-associates. Interacts with ODF1. May associate with microtubules. Interacts with SUN3 and SYNE1; suggesting the formation of a LINC complexs; a SUN domain-based heterotrimer of SPAG4 and SUN3 may associate with SYNE1. Interacts with SEPT12 and LMNB1; during spermatogenesis. As to expression, testis specific. Exclusively expressed in spermatids.

Its subcellular location is the membrane. The protein localises to the cytoplasm. It localises to the cytoskeleton. It is found in the flagellum axoneme. The protein resides in the nucleus envelope. Its subcellular location is the nucleus inner membrane. In terms of biological role, involved in spermatogenesis. Required for sperm head formation but not required to establish and maintain general polarity of the sperm head. Required for anchoring and organization of the manchette. Required for targeting of SUN3 and probably SYNE1 through a probable SUN1:SYNE3 LINC complex to the nuclear envelope and involved in accurate posterior sperm head localization of the complex. May anchor SUN3 the nuclear envelope. Involved in maintenance of the nuclear envelope integrity. May assist the organization and assembly of outer dense fibers (ODFs), a specific structure of the sperm tail. The polypeptide is Sperm-associated antigen 4 protein (Spag4) (Rattus norvegicus (Rat)).